A 430-amino-acid polypeptide reads, in one-letter code: Replication protein A 32 kDa subunit C (430 aa).

Residues 14 to 46 (MPSQRSGAPAPEYSAAGTGAAAAPSPSKPRDPR) form a disordered region. Residues 23–38 (APEYSAAGTGAAAAPS) show a composition bias toward low complexity. The OB DNA-binding region spans 86 to 160 (VRVLGRVVSV…QGLARSIRPI (75 aa)).

Belongs to the replication factor A protein 2 family. As to quaternary structure, heterotrimer of RPA1, RPA2 and RPA3 (canonical replication protein A complex). Interacts with RPA1C and RPA3. Post-translationally, phosphorylated in a cell-cycle-dependent manner (from the S phase until mitosis). In response to DNA damage, recruited to DNA-repair nuclear foci, as a hypophosphorylated form.

It localises to the nucleus. Functionally, component of the replication protein A complex (RPA) required for DNA recombination, repair and replication. The activity of RPA is mediated by single-stranded DNA binding and protein interactions. This Oryza sativa subsp. japonica (Rice) protein is Replication protein A 32 kDa subunit C (RPA2C).